A 156-amino-acid chain; its full sequence is Maintenance of carboxysome distribution protein B (156 aa).

The required for interaction with McdA:DNA complex stretch occupies residues 1–55; the sequence is MSNNALDRLINKQKPKVPPRNDVVSESVSNDIKTQGQQELNTSLPPSDTKATPEE. A disordered region spans residues 1 to 79; sequence MSNNALDRLI…QKPKLSPDTF (79 aa). The span at 24–50 shows a compositional bias: polar residues; sequence VSESVSNDIKTQGQQELNTSLPPSDTK. Over residues 51–63 the composition is skewed to basic and acidic residues; that stretch reads ATPEEMPTSHESE. The stretch at 122-156 forms a coiled coil; sequence PEELAQVIQLAQERLSQRKAIADYKRAKTMQERFL.

As to quaternary structure, homodimerizes; may exist in higher order oligomers in solution. Forms a complex with McdA:DNA. Homohexamerizes, interacts with shell components of the carboxysome.

It is found in the carboxysome. In terms of biological role, mcdA and McdB together mediate carboxysome (Cb) spacing, size, ultrastructure and probably inheritance in the cell, together they prevent Cb aggregation. McdA is an ATPase that forms dynamic gradients on the nucleoid in response to adapter protein McdB, which associates with carboxysomes. The interplay between McdA gradients on the nucleoid and McdB-bound carboxysomes result in the equal spacing of Cbs along the cell length. Stimulates the ATPase activity of McdA, causing McdA to be released from DNA. Undergoes liquid-liquid phase separation. Functionally, incorrect positioning (aggregation) of carboxysomes results in reduced CO(2) fixation by encapsulated ribulose-1,5-bisphosphate carboxylase (RuBisCO, cbbL/cbbS), which leads to slower growth. The chain is Maintenance of carboxysome distribution protein B from Gloeothece citriformis (strain PCC 7424) (Cyanothece sp. (strain PCC 7424)).